The sequence spans 91 residues: Small ribosomal subunit protein uS19 (91 aa).

Belongs to the universal ribosomal protein uS19 family.

Its function is as follows. Protein S19 forms a complex with S13 that binds strongly to the 16S ribosomal RNA. The chain is Small ribosomal subunit protein uS19 from Pseudomonas putida (strain ATCC 700007 / DSM 6899 / JCM 31910 / BCRC 17059 / LMG 24140 / F1).